The sequence spans 141 residues: Galactose-6-phosphate isomerase subunit LacA (141 aa).

It belongs to the LacAB/RpiB family. Heteromultimeric protein consisting of LacA and LacB.

The enzyme catalyses aldehydo-D-galactose 6-phosphate = keto-D-tagatose 6-phosphate. It participates in carbohydrate metabolism; D-galactose 6-phosphate degradation; D-tagatose 6-phosphate from D-galactose 6-phosphate: step 1/1. This Streptococcus equi subsp. equi (strain 4047) protein is Galactose-6-phosphate isomerase subunit LacA.